The following is a 393-amino-acid chain: MYTRLSSLALRHHRHNHNNSVLLLSSLISLRHCSSPPTNPEPPQTLASLRHRLAVESPSLSDFVRLQTSDDYSVEVGTKKKPLSKPKWMKESIPGGAKYTQIKKKLRQLNLHTVCEEARCPNMGECWSGGETGTATATIMILGDTCTRGCRFCNVKTSRTPPPPDPDEPSKVAEAIASWGLDYVVITSVDRDDLPDQGSGHFAETVQKLKILKPNMLIEALVPDFRGDPGCVEKVSKSGLDVFAHNIETVEELQSAVRDHRANFKQSLEVLKLAKEYADAGTLTKTSIMLGCGETPDQVVRTMEKVRAAGVDVMTFGQYMRPSKRHMPVSEYITPEAFEKYRILGMDMGFRYVASGPMVRSSYKAGEFYIKSMIDADRAMSWASSSPSPLPAA.

[4Fe-4S] cluster is bound by residues cysteine 115, cysteine 120, cysteine 126, cysteine 146, cysteine 150, cysteine 153, and serine 362. A Radical SAM core domain is found at glutamate 131–arginine 351.

Belongs to the radical SAM superfamily. Lipoyl synthase family. [4Fe-4S] cluster serves as cofactor.

Its subcellular location is the mitochondrion. It carries out the reaction [[Fe-S] cluster scaffold protein carrying a second [4Fe-4S](2+) cluster] + N(6)-octanoyl-L-lysyl-[protein] + 2 oxidized [2Fe-2S]-[ferredoxin] + 2 S-adenosyl-L-methionine + 4 H(+) = [[Fe-S] cluster scaffold protein] + N(6)-[(R)-dihydrolipoyl]-L-lysyl-[protein] + 4 Fe(3+) + 2 hydrogen sulfide + 2 5'-deoxyadenosine + 2 L-methionine + 2 reduced [2Fe-2S]-[ferredoxin]. The protein operates within protein modification; protein lipoylation via endogenous pathway; protein N(6)-(lipoyl)lysine from octanoyl-[acyl-carrier-protein]: step 2/2. In terms of biological role, catalyzes the radical-mediated insertion of two sulfur atoms into the C-6 and C-8 positions of the octanoyl moiety bound to the lipoyl domains of lipoate-dependent enzymes, thereby converting the octanoylated domains into lipoylated derivatives. The protein is Lipoyl synthase, mitochondrial of Vitis vinifera (Grape).